The chain runs to 444 residues: MSAGKLPVDWKTVELGELIKLSTGKLDANAADNDGQYPFFTCAESVSQINSWAFDTSAVLLAGNGSFSIKKYTGKFNAYQRTYVIEPILIKTEFLYWLLRGNIKKITENGRGSTIPYIRKGDITDISVALPSPSEQTLIAEKLDTLLAQVESTKARLEQIPQILKRFRQAVLTFAMNGELTKEWRSQNNNPAFFPAEKNSLKQFRNKELPSIPNNWSWMRFDQVADIASKLKSPLDYPNTIHLAPNHIESWTGKASGYQTILEDGVTSAKHEFYTGQIIYSKIRPYLCKVTIATFDGMCSADMYPINSKIDTHFLFRWMLTNTFTDWASNAESRTVLPKINQKDLSEIPVPTPPLPEQHEIVRRVEQLFAYADTIEKQVNNALARVNNLTQSILAKAFRGELTAQWRAENPDLISGENSAAALLEKIKAERAASGGKKASRKKS.

The protein belongs to the type-I restriction system S methylase family. As to quaternary structure, the type I restriction/modification system is composed of three polypeptides R, M and S; the restriction enzyme has stoichiometry R(2)M(2)S(1) while the methyltransferase is M(2)S(1).

The specificity (S) subunit of a type I restriction enzyme; this subunit dictates DNA sequence specificity. The M and S subunits together form a methyltransferase (MTase) that methylates two adenine residues of the sequence 5'-TTAN(7)GTCY-3'. In the presence of the R subunit the complex can also act as an endonuclease, binding to the same target sequence but cutting the DNA some distance from this site. Whether the DNA is cut or modified depends on the methylation state of the target sequence. When the target site is unmodified, the DNA is cut. When the target site is hemimethylated, the complex acts as a maintenance MTase modifying the DNA so that both strands become methylated. After locating a non-methylated recognition site, the enzyme complex serves as a molecular motor that translocates DNA in an ATP-dependent manner until a collision occurs that triggers cleavage. This Escherichia coli protein is Type I restriction enzyme EcoDI specificity subunit.